Here is a 116-residue protein sequence, read N- to C-terminus: uncharacterized protein (116 aa).

This is an uncharacterized protein from Saccharolobus islandicus (Sulfolobus islandicus).